The following is a 132-amino-acid chain: Small ribosomal subunit protein uS8 (132 aa).

It belongs to the universal ribosomal protein uS8 family. In terms of assembly, part of the 30S ribosomal subunit. Contacts proteins S5 and S12.

In terms of biological role, one of the primary rRNA binding proteins, it binds directly to 16S rRNA central domain where it helps coordinate assembly of the platform of the 30S subunit. This Rickettsia conorii (strain ATCC VR-613 / Malish 7) protein is Small ribosomal subunit protein uS8.